Here is a 545-residue protein sequence, read N- to C-terminus: Methionine--tRNA ligase (545 aa).

A 'HIGH' region motif is present at residues Pro15–His25. Positions 146, 149, 159, and 162 each coordinate Zn(2+). The 'KMSKS' region signature appears at Lys332–Ser336. Lys335 is an ATP binding site.

The protein belongs to the class-I aminoacyl-tRNA synthetase family. MetG type 1 subfamily. Monomer. Zn(2+) is required as a cofactor.

Its subcellular location is the cytoplasm. It catalyses the reaction tRNA(Met) + L-methionine + ATP = L-methionyl-tRNA(Met) + AMP + diphosphate. Its function is as follows. Is required not only for elongation of protein synthesis but also for the initiation of all mRNA translation through initiator tRNA(fMet) aminoacylation. The polypeptide is Methionine--tRNA ligase (Hamiltonella defensa subsp. Acyrthosiphon pisum (strain 5AT)).